The chain runs to 63 residues: Potassium channel toxin MeuTXKalpha4 (63 aa).

The first 28 residues, 1–28 (MSRLLIFILTAVVLSVIIDILNNSKVEG), serve as a signal peptide directing secretion. Cystine bridges form between Cys-35-Cys-53, Cys-39-Cys-59, and Cys-43-Cys-61.

Belongs to the short scorpion toxin superfamily. Potassium channel inhibitor family. As to expression, expressed by the venom gland.

The protein resides in the secreted. May block voltage-gated potassium channels (Kv). This chain is Potassium channel toxin MeuTXKalpha4, found in Mesobuthus eupeus (Lesser Asian scorpion).